We begin with the raw amino-acid sequence, 497 residues long: Probable cytosol aminopeptidase (497 aa).

Lys-265 and Asp-270 together coordinate Mn(2+). Lys-277 is an active-site residue. Mn(2+) is bound by residues Asp-288, Asp-347, and Glu-349. Residue Arg-351 is part of the active site.

The protein belongs to the peptidase M17 family. Requires Mn(2+) as cofactor.

Its subcellular location is the cytoplasm. The enzyme catalyses Release of an N-terminal amino acid, Xaa-|-Yaa-, in which Xaa is preferably Leu, but may be other amino acids including Pro although not Arg or Lys, and Yaa may be Pro. Amino acid amides and methyl esters are also readily hydrolyzed, but rates on arylamides are exceedingly low.. It catalyses the reaction Release of an N-terminal amino acid, preferentially leucine, but not glutamic or aspartic acids.. In terms of biological role, presumably involved in the processing and regular turnover of intracellular proteins. Catalyzes the removal of unsubstituted N-terminal amino acids from various peptides. This Geobacillus thermodenitrificans (strain NG80-2) protein is Probable cytosol aminopeptidase.